The primary structure comprises 605 residues: MGNDKTNMIIAIALSLAVLLGWNYFVAAPQVERQRQQQAQTSASPSPKEGGPSAPVPGTLPGASGGNPQAALTREEALARSPRVRIDTEALKGSVALKGGRIDDVALKGYHETVDPKSPEIVLLSPAGSANPYYAEFGWVGQGAGPLPNGDTVWTADGDLLTAKKPLTLTWDNGAGLVFRRTLSVDDKYMFTVEDSVENKGQSAVTLYPYGLVSRWGKPHTQGYYVLHEGLIGVLGDKGLQEYTYDKMAKENPLGSPGTRGLSWPGVTGGFLGITDKYWAAATIPDQKTPYTGSFTERDEGATKVYQTSSLGEARTLAPGAGVQASQHLFAGAKEVSTIDAYRQKLDIKQFDLMIDWGWFYFITKPMFKALDFFYKLFGNFGVSILVVTLILKLFFLPIANRSYVSMAKMKAVQPEMTAIRERYADDKVKQQQAMMELYRKEKINPVAGCWPVVIQIPVFFALYKVLFVTIEMRHAPFFGWIRDLAAPDPTSVLNLFGLLPFAAPDLVHLGVWPIVMGITMFLQMKMNPAPPDPVQAQVFTFMPIIFTFMLGSFPAGLVIYWAWNNLLSILQQYWIMRRNGVKVELWDNLRTTFSRSSPVKAAKG.

The chain crosses the membrane as a helical span at residues 8–28; that stretch reads MIIAIALSLAVLLGWNYFVAA. Residues 35 to 47 are compositionally biased toward low complexity; the sequence is RQQQAQTSASPSP. The segment at 35–71 is disordered; it reads RQQQAQTSASPSPKEGGPSAPVPGTLPGASGGNPQAA. 4 helical membrane passes run 377–397, 451–471, 496–516, and 540–560; these read LFGN…LFFL, WPVV…FVTI, LFGL…WPIV, and FTFM…GLVI.

It belongs to the OXA1/ALB3/YidC family. Type 1 subfamily. In terms of assembly, interacts with the Sec translocase complex via SecD. Specifically interacts with transmembrane segments of nascent integral membrane proteins during membrane integration.

It localises to the cell inner membrane. Required for the insertion and/or proper folding and/or complex formation of integral membrane proteins into the membrane. Involved in integration of membrane proteins that insert both dependently and independently of the Sec translocase complex, as well as at least some lipoproteins. Aids folding of multispanning membrane proteins. This Methylobacterium nodulans (strain LMG 21967 / CNCM I-2342 / ORS 2060) protein is Membrane protein insertase YidC.